A 195-amino-acid polypeptide reads, in one-letter code: Small ribosomal subunit protein uS4 (195 aa).

Residues 88–150 (RRLENVVYRL…SKNVELIKLA (63 aa)) enclose the S4 RNA-binding domain.

This sequence belongs to the universal ribosomal protein uS4 family. Part of the 30S ribosomal subunit. Contacts protein S5. The interaction surface between S4 and S5 is involved in control of translational fidelity.

Its function is as follows. One of the primary rRNA binding proteins, it binds directly to 16S rRNA where it nucleates assembly of the body of the 30S subunit. With S5 and S12 plays an important role in translational accuracy. This chain is Small ribosomal subunit protein uS4, found in Fusobacterium nucleatum subsp. nucleatum (strain ATCC 25586 / DSM 15643 / BCRC 10681 / CIP 101130 / JCM 8532 / KCTC 2640 / LMG 13131 / VPI 4355).